The following is a 165-amino-acid chain: Xanthine-guanine phosphoribosyltransferase (165 aa).

5-phospho-alpha-D-ribose 1-diphosphate is bound by residues 41 to 42 (RG) and 98 to 106 (DDLTDTGKT). A Mg(2+)-binding site is contributed by D99. The guanine site is built by D102 and I145. D102 and I145 together coordinate xanthine. GMP contacts are provided by residues 102–106 (DTGKT) and 144–145 (WI).

This sequence belongs to the purine/pyrimidine phosphoribosyltransferase family. XGPT subfamily. Homotetramer. Mg(2+) serves as cofactor.

Its subcellular location is the cell inner membrane. It carries out the reaction GMP + diphosphate = guanine + 5-phospho-alpha-D-ribose 1-diphosphate. It catalyses the reaction XMP + diphosphate = xanthine + 5-phospho-alpha-D-ribose 1-diphosphate. The enzyme catalyses IMP + diphosphate = hypoxanthine + 5-phospho-alpha-D-ribose 1-diphosphate. It participates in purine metabolism; GMP biosynthesis via salvage pathway; GMP from guanine: step 1/1. The protein operates within purine metabolism; XMP biosynthesis via salvage pathway; XMP from xanthine: step 1/1. Purine salvage pathway enzyme that catalyzes the transfer of the ribosyl-5-phosphate group from 5-phospho-alpha-D-ribose 1-diphosphate (PRPP) to the N9 position of the 6-oxopurines guanine and xanthine to form the corresponding ribonucleotides GMP (guanosine 5'-monophosphate) and XMP (xanthosine 5'-monophosphate), with the release of PPi. To a lesser extent, also acts on hypoxanthine. This Sinorhizobium medicae (strain WSM419) (Ensifer medicae) protein is Xanthine-guanine phosphoribosyltransferase.